The primary structure comprises 190 residues: Pyridoxal 5'-phosphate synthase subunit PdxT (190 aa).

Residue 46–48 (GES) participates in L-glutamine binding. C78 acts as the Nucleophile in catalysis. Residues R105 and 133–134 (IR) contribute to the L-glutamine site. Catalysis depends on charge relay system residues H169 and E171.

Belongs to the glutaminase PdxT/SNO family. In terms of assembly, in the presence of PdxS, forms a dodecamer of heterodimers. Only shows activity in the heterodimer.

It catalyses the reaction aldehydo-D-ribose 5-phosphate + D-glyceraldehyde 3-phosphate + L-glutamine = pyridoxal 5'-phosphate + L-glutamate + phosphate + 3 H2O + H(+). It carries out the reaction L-glutamine + H2O = L-glutamate + NH4(+). Its pathway is cofactor biosynthesis; pyridoxal 5'-phosphate biosynthesis. Its function is as follows. Catalyzes the hydrolysis of glutamine to glutamate and ammonia as part of the biosynthesis of pyridoxal 5'-phosphate. The resulting ammonia molecule is channeled to the active site of PdxS. This Niallia circulans (Bacillus circulans) protein is Pyridoxal 5'-phosphate synthase subunit PdxT.